A 262-amino-acid chain; its full sequence is MSSELSPIDKAKFVCAKRAAQLVESGMRVGLGTGSTAAWLVRCLGQRVRNEGLQITGVPTSTRTAELAREVGIDIITLDAAKRLDLTIDGADEFDGAFNLIKGGGGALLHEKVVAASSDRMVVIADVGKEVETLGAFPLPIEVIPFGLQTTHALVDETLVSMDVLGRDSSLRMDGDKPFVTDEGNHIIDLHLKRIGDARQLALTLNQVPGVVENGLFIDICDTVVLGFGDGKVEVRDINDGTIASERMIFAETDNLFSDLSD.

Substrate contacts are provided by residues 33 to 36 (TGST), 89 to 92 (DGAD), and 102 to 105 (KGGG). Catalysis depends on E111, which acts as the Proton acceptor. K129 contacts substrate.

This sequence belongs to the ribose 5-phosphate isomerase family. Homodimer.

The catalysed reaction is aldehydo-D-ribose 5-phosphate = D-ribulose 5-phosphate. It participates in carbohydrate degradation; pentose phosphate pathway; D-ribose 5-phosphate from D-ribulose 5-phosphate (non-oxidative stage): step 1/1. Functionally, catalyzes the reversible conversion of ribose-5-phosphate to ribulose 5-phosphate. This Roseobacter denitrificans (strain ATCC 33942 / OCh 114) (Erythrobacter sp. (strain OCh 114)) protein is Ribose-5-phosphate isomerase A.